The following is a 116-amino-acid chain: Small ribosomal subunit protein bS16 (116 aa).

It belongs to the bacterial ribosomal protein bS16 family.

The protein is Small ribosomal subunit protein bS16 of Chlamydia trachomatis serovar A (strain ATCC VR-571B / DSM 19440 / HAR-13).